The following is a 267-amino-acid chain: Small ribosomal subunit protein uS2 (267 aa).

Positions 232–267 (ATVREEEFADAPAEDAKPARRAPAKKAAADKGEAQA) are disordered. A compositionally biased stretch (basic and acidic residues) spans 258-267 (AAADKGEAQA).

Belongs to the universal ribosomal protein uS2 family.

The protein is Small ribosomal subunit protein uS2 of Stenotrophomonas maltophilia (strain R551-3).